Consider the following 629-residue polypeptide: Phosphatidylinositol-3,5-bisphosphate 3-phosphatase MTMR8 (629 aa).

Residues 126 to 500 (GWKLIDLKVD…FSFQFWCGMY (375 aa)) enclose the Myotubularin phosphatase domain. 3 residues coordinate a 1,2-diacyl-sn-glycero-3-phospho-(1D-myo-inositol-3,5-bisphosphate): Asn250, Asn275, and Ile276. The a 1,2-diacyl-sn-glycero-3-phospho-(1D-myo-inositol-3-phosphate) site is built by Asn250, Asn275, and Ile276. Cys338 serves as the catalytic Phosphocysteine intermediate. Positions 339, 340, 341, 342, 343, 344, 380, and 384 each coordinate a 1,2-diacyl-sn-glycero-3-phospho-(1D-myo-inositol-3,5-bisphosphate). Residues Ser339, Asp340, Gly341, Trp342, Asp343, and Arg344 each coordinate a 1,2-diacyl-sn-glycero-3-phospho-(1D-myo-inositol-3-phosphate). 2 residues coordinate phosphate: Ser339 and Asp340. 3 residues coordinate phosphate: Trp342, Asp343, and Arg344. Residue Arg384 coordinates a 1,2-diacyl-sn-glycero-3-phospho-(1D-myo-inositol-3-phosphate). A coiled-coil region spans residues 517-543 (LLSCMNQKIKLEDNASELENKLPFLDG).

This sequence belongs to the protein-tyrosine phosphatase family. Non-receptor class myotubularin subfamily. Homodimer.

The protein localises to the nucleus envelope. The catalysed reaction is a 1,2-diacyl-sn-glycero-3-phospho-(1D-myo-inositol-3,5-bisphosphate) + H2O = a 1,2-diacyl-sn-glycero-3-phospho-(1D-myo-inositol-5-phosphate) + phosphate. It carries out the reaction a 1,2-diacyl-sn-glycero-3-phospho-(1D-myo-inositol-3-phosphate) + H2O = a 1,2-diacyl-sn-glycero-3-phospho-(1D-myo-inositol) + phosphate. The enzyme catalyses 1,2-dioctanoyl-sn-glycero-3-phospho-(1D-myo-inositol-3,5-bisphosphate) + H2O = 1,2-dioctanoyl-sn-glycero-3-phospho-(1D-myo-inositol-5-phosphate) + phosphate. Functionally, lipid phosphatase that specifically dephosphorylates the D-3 position of phosphatidylinositol 3-phosphate and phosphatidylinositol 3,5-bisphosphate, generating phosphatidylinositol and phosphatidylinositol 5-phosphate. The sequence is that of Phosphatidylinositol-3,5-bisphosphate 3-phosphatase MTMR8 from Gallus gallus (Chicken).